We begin with the raw amino-acid sequence, 330 residues long: D-lactate dehydrogenase (330 aa).

NAD(+)-binding positions include 156–157, D176, 206–207, 233–235, and D259; these read RI, VP, and AAR. The active site involves R235. Residue E264 is part of the active site. The active-site Proton donor is the H296.

The protein belongs to the D-isomer specific 2-hydroxyacid dehydrogenase family.

The catalysed reaction is (R)-lactate + NAD(+) = pyruvate + NADH + H(+). This Staphylococcus aureus (strain MRSA252) protein is D-lactate dehydrogenase (ldhD).